A 1196-amino-acid polypeptide reads, in one-letter code: Contactin rig-6 (1196 aa).

The signal sequence occupies residues 1–19 (MMMLIRCISIFLLFGFVNA). Residues Asn-100 and Asn-195 are each glycosylated (N-linked (GlcNAc...) asparagine). 2 Ig-like C2-type domains span residues 144–225 (PQIS…ARNS) and 232–319 (PPIL…CSLS). 2 disulfides stabilise this stretch: Cys-169–Cys-220 and Cys-263–Cys-316. Asn-343 is a glycosylation site (N-linked (GlcNAc...) asparagine). Ig-like C2-type domains lie at 355 to 438 (PQIF…VKLR), 441 to 533 (PSIL…ALLT), 539 to 626 (PVFP…VQLI), and 631 to 730 (PSIK…EFVT). The cysteines at positions 372 and 420 are disulfide-linked. An N-linked (GlcNAc...) asparagine glycan is attached at Asn-457. 2 disulfide bridges follow: Cys-462–Cys-517 and Cys-562–Cys-610. N-linked (GlcNAc...) asparagine glycosylation is present at Asn-644. Cys-653 and Cys-718 are joined by a disulfide. Fibronectin type-III domains lie at 736 to 844 (SPIA…TAPG), 849 to 961 (TIDN…SHGE), 963 to 1057 (KKVS…TKQH), and 1064 to 1168 (LIGK…LGSP). 8 N-linked (GlcNAc...) asparagine glycosylation sites follow: Asn-895, Asn-925, Asn-945, Asn-974, Asn-979, Asn-986, Asn-1002, and Asn-1092. The chain crosses the membrane as a helical span at residues 1174–1194 (TTGSSDVPIPSLLLLLLLLLW). A lipid anchor (GPI-anchor amidated serine) is attached at Ser-1177. The propeptide at 1178 to 1196 (SDVPIPSLLLLLLLLLWRL) is removed in mature form.

This sequence belongs to the immunoglobulin superfamily. Contactin family. As to quaternary structure, interacts with sax-7; the interaction establishes synaptic connections between neurons. Expressed in neurons including the I1 and I3 pharyngeal interneurons, NSM and VNC motor neurons, HSN and CAN neurons, the ALM and PLM touch receptor neurons and other unidentified head neurons. Expressed in AVG interneurons. Also expressed in somatic muscles, the excretory canal, the excretory cell and the hypodermis.

Its subcellular location is the cell membrane. The protein resides in the perikaryon. It localises to the cell projection. The protein localises to the axon. It is found in the synapse. Its subcellular location is the cytoplasm. Functionally, probable cell adhesion protein involved in patterning of the nervous system, playing a role in ALM and PLM touch receptor axon growth and VNC axon navigation. By associating with the transmembrane protein sax-7, mediates axonal interactions to establish synaptic connections between the AVG interneuron and the two PHC sensory neurons. Also required for non-neuronal cell migration in the excretory canal, regulating excretory canal elongation and excretory cell morphogenesis. Plays a role in regulating male mating behavior. The protein is Contactin rig-6 of Caenorhabditis elegans.